Consider the following 83-residue polypeptide: UPF0298 protein SERP0712 (83 aa).

The protein belongs to the UPF0298 family.

The protein localises to the cytoplasm. The chain is UPF0298 protein SERP0712 from Staphylococcus epidermidis (strain ATCC 35984 / DSM 28319 / BCRC 17069 / CCUG 31568 / BM 3577 / RP62A).